The primary structure comprises 318 residues: Acetyl-coenzyme A carboxylase carboxyl transferase subunit alpha (318 aa).

Positions 39–292 constitute a CoA carboxyltransferase C-terminal domain; the sequence is LSDKAERQLR…GAAIAETLPG (254 aa).

Belongs to the AccA family. Acetyl-CoA carboxylase is a heterohexamer composed of biotin carboxyl carrier protein (AccB), biotin carboxylase (AccC) and two subunits each of ACCase subunit alpha (AccA) and ACCase subunit beta (AccD).

Its subcellular location is the cytoplasm. The enzyme catalyses N(6)-carboxybiotinyl-L-lysyl-[protein] + acetyl-CoA = N(6)-biotinyl-L-lysyl-[protein] + malonyl-CoA. It participates in lipid metabolism; malonyl-CoA biosynthesis; malonyl-CoA from acetyl-CoA: step 1/1. In terms of biological role, component of the acetyl coenzyme A carboxylase (ACC) complex. First, biotin carboxylase catalyzes the carboxylation of biotin on its carrier protein (BCCP) and then the CO(2) group is transferred by the carboxyltransferase to acetyl-CoA to form malonyl-CoA. The sequence is that of Acetyl-coenzyme A carboxylase carboxyl transferase subunit alpha from Acidiphilium cryptum (strain JF-5).